The chain runs to 158 residues: Cyclic pyranopterin monophosphate synthase (158 aa).

Residues 75–77 and 113–114 contribute to the substrate site; these read LCH and ME. Aspartate 128 is a catalytic residue.

It belongs to the MoaC family. In terms of assembly, homohexamer; trimer of dimers.

It carries out the reaction (8S)-3',8-cyclo-7,8-dihydroguanosine 5'-triphosphate = cyclic pyranopterin phosphate + diphosphate. It functions in the pathway cofactor biosynthesis; molybdopterin biosynthesis. Functionally, catalyzes the conversion of (8S)-3',8-cyclo-7,8-dihydroguanosine 5'-triphosphate to cyclic pyranopterin monophosphate (cPMP). The sequence is that of Cyclic pyranopterin monophosphate synthase from Actinobacillus pleuropneumoniae serotype 5b (strain L20).